The primary structure comprises 798 residues: Disintegrin and metalloproteinase domain-containing protein B (798 aa).

The N-terminal stretch at 1–23 is a signal peptide; sequence MKAFSCLLAVIATAASLFQHVDA. Over 24-706 the chain is Extracellular; that stretch reads SHARDKLNNI…VSDWVSRHKP (683 aa). N32, N226, N227, N313, and N407 each carry an N-linked (GlcNAc...) asparagine glycan. Residues 271-510 enclose the Peptidase M12B domain; it reads KVALIGVVAD…RTILTNCLTT (240 aa). Disulfide bonds link C395-C495, C448-C459, and C580-C600. Position 431 (H431) interacts with Zn(2+). The active site involves E432. Zn(2+)-binding residues include H435 and H441. Residues 519 to 608 enclose the Disintegrin domain; the sequence is GQQCGNGIVE…DCPHDIHSKD (90 aa). A helical membrane pass occupies residues 707 to 727; the sequence is IVIGVAVGAGCLLLLAIASCI. Topologically, residues 728-798 are cytoplasmic; the sequence is CGRSRRQRPR…PGHMPPTRYA (71 aa). The disordered stretch occupies residues 734 to 798; it reads QRPRNRKMPP…PGHMPPTRYA (65 aa). Pro residues predominate over residues 775–792; it reads NNIPPPINAPPPAYPGHM.

It depends on Zn(2+) as a cofactor.

The protein localises to the membrane. In terms of biological role, probable zinc protease. The sequence is that of Disintegrin and metalloproteinase domain-containing protein B (ADM-B) from Trichophyton verrucosum (strain HKI 0517).